The chain runs to 553 residues: Putative transport protein YidE (553 aa).

The next 5 helical transmembrane spans lie at 4-24 (IALT…IGNI), 28-48 (GVGF…HFVD), 65-85 (FGLI…FFAS), 95-115 (LFAV…HKIF), and 158-178 (MSYA…MWLM). 2 consecutive RCK C-terminal domains span residues 192–276 (KHES…VIGK) and 279–361 (DTSL…VVGN). Transmembrane regions (helical) follow at residues 371–391 (MLPV…PLFV), 393–413 (GFPV…ALIL), 437–457 (LGIV…FVDT), 464–484 (LSWI…VGLL), 493–513 (YLTL…LAFA), and 533–553 (LVMF…WGMG).

It belongs to the AAE transporter (TC 2.A.81) family. YidE subfamily.

The protein resides in the cell membrane. In Salmonella newport (strain SL254), this protein is Putative transport protein YidE.